The following is a 493-amino-acid chain: MEGATTKPRLVPSTRFALSLVMFFGCLVTYMMRTNMSFAVVCMVNENKTDTGVEKVSRCGKEMTPVESNSSVIGEFDWDKQTTGMVLSSFFYGYIGSQIIGGHLASRYGGKRVVFVTILGSALLTLLNPVAARTSEYALAILRAAIGFLQGATFPAMHTMWSVWGPPLELSVLTGVTYAGAQIGNVIVLPLSGFLCEYGFDGGWPSIFYIIGVFGVLWTAVWWYVSSDKPATHPRITPEEKQYIVTAVEASMGKDTGKVPSTPWIKILTSPAVWACWAGHFAGDWGAYTMLVSLPSFLKDVLGLNLSSLGAVASIPYIAYFLAINAGGVLADTLRSKGILSTLNTRRAAMLVALIGQGIFLVASGYCGCGQDVLVIIFITCGMAISGLQYAGFVVNYLEIAPPFSGTVMGTGNTISALAGIISPAVSSYLTPNGTQEEWQMVLWLTAGILTIGALLFSIFASGEVQPWAKLTAEEGHEMAPLREGEKIELATA.

Residues 10–30 (LVPSTRFALSLVMFFGCLVTY) traverse the membrane as a helical segment. 3 N-linked (GlcNAc...) asparagine glycosylation sites follow: asparagine 35, asparagine 47, and asparagine 69. The next 6 membrane-spanning stretches (helical) occupy residues 85-105 (MVLS…GHLA), 112-132 (RVVF…PVAA), 144-164 (AAIG…WSVW), 175-195 (GVTY…SGFL), 205-225 (PSIF…WWYV), and 272-292 (AVWA…TMLV). Asparagine 305 carries an N-linked (GlcNAc...) asparagine glycan. 4 helical membrane-spanning segments follow: residues 311–331 (AVAS…GVLA), 348–368 (AAML…GYCG), 375–395 (VIIF…GFVV), and 406–426 (GTVM…SPAV). N-linked (GlcNAc...) asparagine glycosylation occurs at asparagine 433. Residues 441 to 461 (MVLWLTAGILTIGALLFSIFA) traverse the membrane as a helical segment.

Belongs to the major facilitator superfamily. Sodium/anion cotransporter family.

The protein resides in the membrane. This is an uncharacterized protein from Caenorhabditis elegans.